Consider the following 146-residue polypeptide: 3-dehydroquinate dehydratase (146 aa).

Tyrosine 23 serves as the catalytic Proton acceptor. Residues asparagine 79, histidine 85, and aspartate 92 each coordinate substrate. Histidine 105 serves as the catalytic Proton donor. Substrate is bound by residues 106 to 107 and arginine 116; that span reads IS.

It belongs to the type-II 3-dehydroquinase family. In terms of assembly, homododecamer.

The catalysed reaction is 3-dehydroquinate = 3-dehydroshikimate + H2O. Its pathway is metabolic intermediate biosynthesis; chorismate biosynthesis; chorismate from D-erythrose 4-phosphate and phosphoenolpyruvate: step 3/7. In terms of biological role, catalyzes a trans-dehydration via an enolate intermediate. The protein is 3-dehydroquinate dehydratase of Variovorax paradoxus (strain S110).